The sequence spans 284 residues: S-formylglutathione hydrolase (284 aa).

Ala2 bears the N-acetylalanine mark. The substrate site is built by Asn63 and Lys67. Residues Ser152, Asp229, and His262 each act as charge relay system in the active site.

This sequence belongs to the esterase D family. As to quaternary structure, homodimer.

It carries out the reaction S-formylglutathione + H2O = formate + glutathione + H(+). Its activity is regulated as follows. Activity toward p-nitrophenyl acetate inhibited by N-ethylmaleimide, 10-(fluoroethoxyphosphinyl)-N-(biotinamidopentyl)decanamide (FP-biotin), iodoacetamide, CuCl(2) and ZnSO(4), but not by phenylmethylsulfonyl fluoride, EDTA, Mg(2+), Mn(2+), Ca(2+) or paraoxon, an organo-phosphate inhibitor of serine hydrolases. Its function is as follows. Serine hydrolase which catalyzes the hydrolysis of S-formylglutathione to glutathione and formic acid. Also hydrolyzes S-acetylglutathione and a range of carboxyesters in vitro. Involved in the detoxification of formaldehyde. The polypeptide is S-formylglutathione hydrolase (SFGH) (Arabidopsis thaliana (Mouse-ear cress)).